We begin with the raw amino-acid sequence, 452 residues long: Lamina-associated polypeptide 2, isoform beta (452 aa).

The tract at residues 1-409 (MPEFLEDPSV…KSEKTKKGRS (409 aa)) is nucleoplasmic. In terms of domain architecture, LEM-like spans 5–48 (LEDPSVLTKDKLKSELVANNVTLPAGEQRKDVYVQLYLQHLTAR). Disordered stretches follow at residues 48-113 (RNRP…DVTE) and 149-264 (REQG…VEPS). The interval 49 to 107 (NRPPLAAGANSKGPPDFSSDEEREPTPVLGSGASVGRGRGAVGRKATKKTDKPRPEDKD) is linker. Residues S66 and S67 each carry the phosphoserine modification. T74 is modified (phosphothreonine). A Phosphoserine modification is found at S82. 2 positions are modified to omega-N-methylarginine: R85 and R87. The span at 96–105 (KKTDKPRPED) shows a compositional bias: basic and acidic residues. The LEM domain maps to 108–152 (DLDVTELSNEELLEQLVRYGVNPGPIVGTTRKLYEKKLLKLREQG). The segment at 137–242 (TRKLYEKKLL…TSGSSKGGPL (106 aa)) is NAKAP95-binding N. Over residues 154 to 177 (ESRSSTPLPTVSSSAENTRQNGSN) the composition is skewed to polar residues. A phosphoserine mark is found at S155 and S158. A Phosphothreonine modification is found at T159. Residues S165, S167, S176, S179, and S183 each carry the phosphoserine modification. Residues 178 to 202 (DSDRYSDNDEDSKIELKLEKREPLK) show a composition bias toward basic and acidic residues. The residue at position 206 (K206) is an N6-acetyllysine. Residues 298-370 (TGNFKHASSI…SCRRPIKGAA (73 aa)) form a binds lamins B region. An NAKAP95-binding C region spans residues 299–373 (GNFKHASSIL…RPIKGAAGRP (75 aa)). A phosphoserine mark is found at S305, S306, and S361. The residue at position 388 (K388) is an N6-acetyllysine. Residues 410 to 430 (VPMWIKMLLFALVAGFLFLVY) traverse the membrane as a helical; Signal-anchor for type II membrane protein segment. Residues 431–452 (QAMETNQGNPFTNFLQDTKISN) lie on the Lumenal side of the membrane.

Belongs to the LEM family. Interacts with LMNB1, LMNB2, BANF1, AKAP8L, GMCL and chromosomes. Mitosis-specific phosphorylation specifically abolishes its binding to lamin B and chromosomes.

Its subcellular location is the nucleus inner membrane. The protein resides in the chromosome. Binds directly to lamin B1 and chromosomes in a mitotic phosphorylation-regulated manner. May play an important role in nuclear envelope reassembly at the end of mitosis and/or anchoring of the nuclear lamina and interphase chromosomes to the nuclear envelope. This is Lamina-associated polypeptide 2, isoform beta (Tmpo) from Rattus norvegicus (Rat).